A 409-amino-acid polypeptide reads, in one-letter code: Tyrosine--tRNA ligase (409 aa).

Residues 54–63 (PTAPDIHLGH) carry the 'HIGH' region motif. The 'KMSKS' region motif lies at 238 to 242 (KMSKS). Position 241 (lysine 241) interacts with ATP. In terms of domain architecture, S4 RNA-binding spans 347–407 (MGILHVLRAS…GKRKFARVNL (61 aa)).

It belongs to the class-I aminoacyl-tRNA synthetase family. TyrS type 2 subfamily. As to quaternary structure, homodimer.

The protein resides in the cytoplasm. The catalysed reaction is tRNA(Tyr) + L-tyrosine + ATP = L-tyrosyl-tRNA(Tyr) + AMP + diphosphate + H(+). Functionally, catalyzes the attachment of tyrosine to tRNA(Tyr) in a two-step reaction: tyrosine is first activated by ATP to form Tyr-AMP and then transferred to the acceptor end of tRNA(Tyr). This is Tyrosine--tRNA ligase from Bordetella avium (strain 197N).